Consider the following 122-residue polypeptide: Large ribosomal subunit protein uL18 (122 aa).

The tract at residues 1-24 (MSTLSRKQQTQKRHRRLRRHLSGT) is disordered. Basic residues predominate over residues 9 to 21 (QTQKRHRRLRRHL).

This sequence belongs to the universal ribosomal protein uL18 family. Part of the 50S ribosomal subunit; part of the 5S rRNA/L5/L18/L25 subcomplex. Contacts the 5S and 23S rRNAs.

Functionally, this is one of the proteins that bind and probably mediate the attachment of the 5S RNA into the large ribosomal subunit, where it forms part of the central protuberance. The chain is Large ribosomal subunit protein uL18 from Synechococcus sp. (strain WH7803).